We begin with the raw amino-acid sequence, 223 residues long: ATP phosphoribosyltransferase (223 aa).

The protein belongs to the ATP phosphoribosyltransferase family. Short subfamily. Heteromultimer composed of HisG and HisZ subunits.

The protein localises to the cytoplasm. The catalysed reaction is 1-(5-phospho-beta-D-ribosyl)-ATP + diphosphate = 5-phospho-alpha-D-ribose 1-diphosphate + ATP. It participates in amino-acid biosynthesis; L-histidine biosynthesis; L-histidine from 5-phospho-alpha-D-ribose 1-diphosphate: step 1/9. Catalyzes the condensation of ATP and 5-phosphoribose 1-diphosphate to form N'-(5'-phosphoribosyl)-ATP (PR-ATP). Has a crucial role in the pathway because the rate of histidine biosynthesis seems to be controlled primarily by regulation of HisG enzymatic activity. The polypeptide is ATP phosphoribosyltransferase (Halothermothrix orenii (strain H 168 / OCM 544 / DSM 9562)).